A 359-amino-acid polypeptide reads, in one-letter code: Cyclin puc1 (359 aa).

The protein belongs to the cyclin family.

Function in exit from the mitotic cycle. Contributes to negative regulation of the timing of sexual development in fission yeast, and functions at the transition between cycling and non-cycling cells. Interacts with protein kinase A. The protein is Cyclin puc1 (puc1) of Schizosaccharomyces pombe (strain 972 / ATCC 24843) (Fission yeast).